A 162-amino-acid chain; its full sequence is Precursor protein UG (162 aa).

An N-terminal signal peptide occupies residues 1–19 (MERILLCFIVATLVAISMA). Positions 20–23 (NPRP) are excised as a propeptide. Disulfide bonds link cysteine 30-cysteine 42 and cysteine 33-cysteine 49. The propeptide occupies 56 to 59 (VPKP). Disulfide bonds link cysteine 66–cysteine 78 and cysteine 69–cysteine 85. The propeptide occupies 92–95 (VPKP). Cystine bridges form between cysteine 102/cysteine 114 and cysteine 105/cysteine 121. Residues 128–131 (VPKP) constitute a propeptide that is removed on maturation. 2 disulfides stabilise this stretch: cysteine 138–cysteine 150 and cysteine 141–cysteine 157.

The protein belongs to the sea anemone BBH family.

It is found in the secreted. The protein resides in the nematocyst. Affects the ASIC3 channel (ACCN3) and produces analgesic effects. It produces a reversible inhibition effect on both the transient and the sustained current of human ASIC3 channels expressed in X.laevis oocytes. It completely blocks the transient component (IC(50)=10 uM) and partially (48%) inhibits the amplitude of the sustained component (IC(50)=1.44 uM). Using in vivo tests in mice, it reverses inflammatory and acid-induced pain. Functionally, does not affect the ASIC3 channel. Does not cause lethality or paralysis of noble crayfish (A.astacus) at a dose of 1 mg/kg. In Urticina grebelnyi (Painted anemone), this protein is Precursor protein UG.